We begin with the raw amino-acid sequence, 1224 residues long: A disintegrin and metalloproteinase with thrombospondin motifs 16 (1224 aa).

An N-terminal signal peptide occupies residues 1 to 24; sequence MKPRARGWRGLAALWMLLAQVAEQ. A propeptide spanning residues 25 to 279 is cleaved from the precursor; it reads APACAMGPAA…EYKSCLRHKR (255 aa). Positions 31-53 are disordered; it reads GPAAAAPGSPSVPRPPPPAERPG. Pro residues predominate over residues 40 to 50; that stretch reads PSVPRPPPPAE. N-linked (GlcNAc...) asparagine glycosylation is present at asparagine 156. A Cysteine switch motif is present at residues 247 to 254; that stretch reads HFCGRRKK. Position 249 (cysteine 249) interacts with Zn(2+). One can recognise a Peptidase M12B domain in the interval 290-495; that stretch reads LNVETLVVVD…AQAICLADQP (206 aa). Asparagine 310 carries N-linked (GlcNAc...) asparagine glycosylation. Cystine bridges form between cysteine 366–cysteine 417, cysteine 392–cysteine 399, cysteine 411–cysteine 490, cysteine 450–cysteine 474, cysteine 518–cysteine 543, cysteine 529–cysteine 550, cysteine 538–cysteine 569, cysteine 563–cysteine 574, cysteine 598–cysteine 635, cysteine 602–cysteine 640, and cysteine 613–cysteine 625. Zn(2+) is bound at residue histidine 433. Glutamate 434 is a catalytic residue. Histidine 437 and histidine 443 together coordinate Zn(2+). One can recognise a Disintegrin domain in the interval 496–585; sequence KPVKEYKYPE…KYGDEGPKPT (90 aa). Residues 586–641 form the TSP type-1 1 domain; sequence HGHWSDWSSWSPCSRTCGGGVSHRSRLCTNPKPSHGGKFCEGSTRTLKLCNSQKCP. Asparagine 741, asparagine 780, asparagine 835, asparagine 905, and asparagine 935 each carry an N-linked (GlcNAc...) asparagine glycan. A spacer region spans residues 747 to 873; it reads IHRGLYTKHH…KQPPAQPSYT (127 aa). TSP type-1 domains are found at residues 874–922, 927–987, 988–1048, 1051–1115, and 1127–1181; these read WAIV…LVPC, CPPS…QSCP, PAWS…QRCH, KKLQ…LPCP, and RGSW…HFCP. Disulfide bonds link cysteine 939-cysteine 981, cysteine 943-cysteine 986, and cysteine 954-cysteine 970. Residues 1186-1223 form the PLAC domain; it reads KDAFCKDYFHWCYLVPQHGMCSHKFYGKQCCKTCSKSN.

Zn(2+) is required as a cofactor. In terms of processing, the precursor is cleaved by a furin endopeptidase. Post-translationally, glycosylated. Can be O-fucosylated by POFUT2 on a serine or a threonine residue found within the consensus sequence C1-X(2)-(S/T)-C2-G of the TSP type-1 repeat domains where C1 and C2 are the first and second cysteine residue of the repeat, respectively. Fucosylated repeats can then be further glycosylated by the addition of a beta-1,3-glucose residue by the glucosyltransferase, B3GALTL. Fucosylation mediates the efficient secretion of ADAMTS family members. Can also be C-glycosylated with one or two mannose molecules on tryptophan residues within the consensus sequence W-X-X-W of the TPRs, and N-glycosylated. These other glycosylations can also facilitate secretion. In terms of tissue distribution, expressed in fetal lung and kidney and in adult prostate and ovary.

The protein resides in the secreted. The protein localises to the extracellular space. It is found in the extracellular matrix. In Homo sapiens (Human), this protein is A disintegrin and metalloproteinase with thrombospondin motifs 16 (ADAMTS16).